Here is an 89-residue protein sequence, read N- to C-terminus: Small ribosomal subunit protein uS15 (89 aa).

This sequence belongs to the universal ribosomal protein uS15 family. In terms of assembly, part of the 30S ribosomal subunit. Forms a bridge to the 50S subunit in the 70S ribosome, contacting the 23S rRNA.

One of the primary rRNA binding proteins, it binds directly to 16S rRNA where it helps nucleate assembly of the platform of the 30S subunit by binding and bridging several RNA helices of the 16S rRNA. In terms of biological role, forms an intersubunit bridge (bridge B4) with the 23S rRNA of the 50S subunit in the ribosome. The polypeptide is Small ribosomal subunit protein uS15 (Mycobacterium leprae (strain Br4923)).